The primary structure comprises 208 residues: Probable hydrolase YcaC (208 aa).

Residue Cys-118 is part of the active site.

In terms of assembly, homooctamer composed of two tetrameric rings.

The chain is Probable hydrolase YcaC (ycaC) from Escherichia coli (strain K12).